The primary structure comprises 215 residues: Leucyl/phenylalanyl-tRNA--protein transferase (215 aa).

It belongs to the L/F-transferase family.

Its subcellular location is the cytoplasm. The enzyme catalyses N-terminal L-lysyl-[protein] + L-leucyl-tRNA(Leu) = N-terminal L-leucyl-L-lysyl-[protein] + tRNA(Leu) + H(+). The catalysed reaction is N-terminal L-arginyl-[protein] + L-leucyl-tRNA(Leu) = N-terminal L-leucyl-L-arginyl-[protein] + tRNA(Leu) + H(+). It catalyses the reaction L-phenylalanyl-tRNA(Phe) + an N-terminal L-alpha-aminoacyl-[protein] = an N-terminal L-phenylalanyl-L-alpha-aminoacyl-[protein] + tRNA(Phe). Functions in the N-end rule pathway of protein degradation where it conjugates Leu, Phe and, less efficiently, Met from aminoacyl-tRNAs to the N-termini of proteins containing an N-terminal arginine or lysine. The polypeptide is Leucyl/phenylalanyl-tRNA--protein transferase (Campylobacter jejuni subsp. jejuni serotype O:6 (strain 81116 / NCTC 11828)).